The sequence spans 114 residues: Non-specific lipid-transfer protein 1 (114 aa).

Residues 1–25 (MIKGLAITVVAVLAVVQLLARPSDA) form the signal peptide. 4 cysteine pairs are disulfide-bonded: Cys-29–Cys-76, Cys-39–Cys-53, Cys-54–Cys-99, and Cys-74–Cys-113.

The protein belongs to the plant LTP family. Expressed in seeds and, at very low levels, in pulp of fruit (at protein level).

Plant non-specific lipid-transfer proteins transfer phospholipids as well as galactolipids across membranes. May play a role in wax or cutin deposition in the cell walls of expanding epidermal cells and certain secretory tissues. This Actinidia chinensis var. chinensis (Chinese soft-hair kiwi) protein is Non-specific lipid-transfer protein 1.